The sequence spans 102 residues: Large ribosomal subunit protein bL21 (102 aa).

This sequence belongs to the bacterial ribosomal protein bL21 family. As to quaternary structure, part of the 50S ribosomal subunit. Contacts protein L20.

In terms of biological role, this protein binds to 23S rRNA in the presence of protein L20. In Citrifermentans bemidjiense (strain ATCC BAA-1014 / DSM 16622 / JCM 12645 / Bem) (Geobacter bemidjiensis), this protein is Large ribosomal subunit protein bL21.